We begin with the raw amino-acid sequence, 355 residues long: Protein HGH1 homolog (355 aa).

Positions 324–355 are disordered; sequence DEEGDPTPEEIEQMNKKQKLEDEDAQFETDEI. 2 stretches are compositionally biased toward acidic residues: residues 325 to 335 and 344 to 355; these read EEGDPTPEEIE and EDEDAQFETDEI.

This sequence belongs to the HGH1 family.

The chain is Protein HGH1 homolog from Dictyostelium discoideum (Social amoeba).